A 226-amino-acid polypeptide reads, in one-letter code: Ribonuclease 3 (226 aa).

The region spanning 6–128 (FNKLQKKMGY…IIGGIFLDSN (123 aa)) is the RNase III domain. Glu41 lines the Mg(2+) pocket. Asp45 is a catalytic residue. 2 residues coordinate Mg(2+): Asn114 and Glu117. Glu117 is an active-site residue. Positions 155 to 225 (DPKTRLQEYL…AKQALLLFNI (71 aa)) constitute a DRBM domain.

Belongs to the ribonuclease III family. Homodimer. It depends on Mg(2+) as a cofactor.

It localises to the cytoplasm. The catalysed reaction is Endonucleolytic cleavage to 5'-phosphomonoester.. Functionally, digests double-stranded RNA. Involved in the processing of primary rRNA transcript to yield the immediate precursors to the large and small rRNAs (23S and 16S). Processes some mRNAs, and tRNAs when they are encoded in the rRNA operon. Processes pre-crRNA and tracrRNA of type II CRISPR loci if present in the organism. This is Ribonuclease 3 from Wigglesworthia glossinidia brevipalpis.